Consider the following 389-residue polypeptide: Flagellar P-ring protein (389 aa).

Residues 1-33 (MRPLVAARRRAAACCALAACMLALAFAPAAARA) form the signal peptide.

Belongs to the FlgI family. The basal body constitutes a major portion of the flagellar organelle and consists of four rings (L,P,S, and M) mounted on a central rod.

It is found in the periplasm. The protein localises to the bacterial flagellum basal body. Its function is as follows. Assembles around the rod to form the L-ring and probably protects the motor/basal body from shearing forces during rotation. This Burkholderia mallei (strain ATCC 23344) protein is Flagellar P-ring protein.